The sequence spans 61 residues: Small ribosomal subunit protein uS14 (61 aa).

Positions 24, 27, 40, and 43 each coordinate Zn(2+).

This sequence belongs to the universal ribosomal protein uS14 family. Zinc-binding uS14 subfamily. Part of the 30S ribosomal subunit. Contacts proteins S3 and S10. Zn(2+) is required as a cofactor.

Its function is as follows. Binds 16S rRNA, required for the assembly of 30S particles and may also be responsible for determining the conformation of the 16S rRNA at the A site. This is Small ribosomal subunit protein uS14 from Limosilactobacillus fermentum (strain NBRC 3956 / LMG 18251) (Lactobacillus fermentum).